A 344-amino-acid polypeptide reads, in one-letter code: Probable glucan endo-1,3-beta-glucosidase At4g16260 (344 aa).

An N-terminal signal peptide occupies residues 1–21 (MTTLFLLIALFITTILNPTSG). Residue Glu116 is the Proton donor of the active site. The active-site Nucleophile is the Glu257.

This sequence belongs to the glycosyl hydrolase 17 family. As to quaternary structure, (Microbial infection) Interacts with the 30C02 effector protein (AC G3GD54) of the beet cyst nematode Heterodera schachtii. Interaction with the 30C02 effector protein may potentially suppress beta-1,3-glucanase activity and plant defense.

Its subcellular location is the secreted. The enzyme catalyses Hydrolysis of (1-&gt;3)-beta-D-glucosidic linkages in (1-&gt;3)-beta-D-glucans.. Functionally, may be involved in plant defense against cyst nematode pathogens. The sequence is that of Probable glucan endo-1,3-beta-glucosidase At4g16260 from Arabidopsis thaliana (Mouse-ear cress).